A 396-amino-acid chain; its full sequence is Ribosomal RNA large subunit methyltransferase I (396 aa).

The PUA domain occupies 2–81 (SVRLVLAKGR…ESIDIAFFSR (80 aa)).

It belongs to the methyltransferase superfamily. RlmI family.

Its subcellular location is the cytoplasm. The enzyme catalyses cytidine(1962) in 23S rRNA + S-adenosyl-L-methionine = 5-methylcytidine(1962) in 23S rRNA + S-adenosyl-L-homocysteine + H(+). Specifically methylates the cytosine at position 1962 (m5C1962) of 23S rRNA. In Shigella flexneri, this protein is Ribosomal RNA large subunit methyltransferase I.